A 2690-amino-acid polypeptide reads, in one-letter code: MEKYDIYYNSNEEYYGDVAVIGIGLRFPSGDLNESISKPNQLFNSLLNGLNGIVTTSERWSDNYYLNGEINSVSAGLLPLDEWKRFDPIFFGINPSYDNVVTIDPQQRLLLKCVWEALEDSGIDPISLRGTNTSTFIGSSTTDYGSLQKSPFETQNNIFGSSNHSVANRIGYNFDFRGENFTIDSACSSSLNAINCGYNSIKSNKSNVSVVGGVNFILDPHVSKSFTQLNMLSPTGKCHSFSSDADGFVRSEGVGIVILKKLKDAIKDSNNIYCVIKGSSSNVDGNYDKLNFYSPSKSSQYENMKLAIKSTNGQINESDIDYCEAHGTGTPTGDPIELEGISRLFDQNNNNKKQVLVGSIKSNIGHTEACSGVASLIKCCIMFKNKLFLQNINFKESNPLINFKEWALKVVTEPITFNENKTTVMLINNFGVTGSNVCLILSEFKDKRYSNDESSSDNFCEQIDIDSKANEKKKFLIPLSSNSSTSLDNYKSIIVNNNDDDSNSSTRSFQEFVYNQIKFKSTSLIQKSVIIASDWNEFQDDDNQIKLKNSESLISNITVEKKKSPLTVIVFCGQGSQYNRMALSLYENEPIFRESVNRFDKELFKYYGYSVLDRLRSVSDKDEISIHLPILAQPANIMIQISLYELYKHWGVSADIIVGHSLGELSSSYSSGMIDFETLCHLIYHRSLAQNKTTGTGRALSVNISYDEFIERYQSKNNKYETLEIACYNSPTSIVIAGKEDLLNEISKEFKSNDIFCAMLGSLSSFHTSSQLMIKDEVCSLVFKSKLPSVPVFSTVTTNLFNDQTPYNANYVWENIRQPVSFTQTISNLYKHIESNDMGNEITFIEVAPHPTLQFYLNQMKSTQSSYFNNGKSVTIYSPLHKKKNDYNEFLKTISLLYVNNNFNINFKSQLTNINNNNNNINNNNNNNNNNNNNNNNNNNNNNNNNKIIQFNINSLPLYQWDDNEYFKLNPFHEKITNEGPSIQNLGNGIDSACPTYQTFIDIKKPPFQWLKGHQVSDKFYYPGMGYVQNLLSIYPNQDITISSLEFKSPLVLTEGNNQCLETTVSLLSKNEFNVKSHYKDQKTNQWILSSLGNFSLFKHNSINSEKLINIQALKDKCNFTTISKHDFYESIKIKTNLTYKGLFQGVKECSIGNNCSLAVVSLNEINNHTISNHSTIGRSLFNAATLDSCLHGSLIAVAQPVVLDRIEGFKLYSSNIPLSSSLSKDDNDNSNNSLIKELYIFTEEKARTNYQSFSASVKIILPNGRLLMEISRVVCSSVSLANPSNTIICKPPSNEIYTPYLQPKDSIINKPQQFKHLYSVDEFIAKEEDNQIISTELLLSLFYKHINVRCPTINLESLTTLEYNQFKQLYYNNNGLVNENLFKFVFEILKSYSSSNHYILNHHNNSENKNKNNNNNNNSNNNENSNNESPIHFEKLYNLYTKTTKIIAKQIFPLKDDSFTDTPQSLFENGFLDDFYKNSRVVQPLNNLLSEIIIEALKPILNQPIVFRILEAGGGTGSLSLLILEKICKLLNANPNSVIDIEFTWSDVSSSFSAEIKEKFSPFTAHKNFNIIHRVLDLEKPLFDQDFKTSYYDLVVMSNVMHVVKKLKPTLDEIHNILTPNGQLLFVEPPYKSINYDSVFCCFSQWWPSSDSDTELRPDRSCMNQDKWIKILNETNYRDTIISGNDNLIFLIQTRKPSINEIISKQSSDSSLDQFNSFNNIILFGNNNYGCSLQNSISSNQELKSKTININNFNEFQTWIANNYDNSDDFDNNKTLIIFLKSIEPINISNFKEITYEYIQINQLILKLELTNNFKHLLISLDSTTDNYLSSSIIGAARYFVEYPQLDLYILNYDIISLKILNNNSSSSCNSSNGSISSCSCKQQQLSLINYLINTNNNIQKEFTINNNKVYYERYTRHSNKIKCNLQSKSFETNKDNLLIQLDSNLEYQLYSKRVEPNSKEVEIEIKATGINYKDYLMHIGMVSSDLDLKYGKEYEVENCIGIENPMIGNDFSGIITRLGSDAEKKKFKVGDHVCGVASKTSGSHVVIDYNFIYHQPLNYNHSISASIPSIYVTSLHSIYGVGNLKSNESILIHSAAGGIGISSLDLLKCKKHQGHIFLTVGSKDKEDYLKKNYGSFITAIYSSRNKDYVNEIKNKLIELGEVKQQGVDLILNTLSSEFMDSNFQCLNMSGRIVDLSVTHLTPNDYIANNHFKYNMGYNNVEMIDFNGKMVRSYLKKIIKMINSNKLELSIPIIEYSNNQFKDAIEYINQRKHIGKIIVNHNQDEFNRVYNNYQQNNNNNNQIIMKHSYDISKLNMGKNILLTGQTGIILEIMKYLIRYSNHSIQNIIILSKSKLKWELELLINQTKFIKDNIIKFHFIQIDIEDSNKVNQVLNQLELNENITNIDSIIHFAFNNDIGDVQDVNMNRLNIAHGAKTIGAINLHNESINRSWKIKQFIIASSVSSIFGSDQQCCYVSACSVIDSLSKYRHSLGLPSLAINLGTVASTGFISRNNAIETMFKSSFLKLFSPQLVISSLDLFIQNQRQYPNYSLVDFNFEVMLTSPNYHLYKLDYEINIFKKSYQINTNSSSGSGSDNEFIHSTILNKISELLSIDESKINEDLQLTQYGMDSLVIVQLKNFIDNQLGHNLITIHQLQHNKINQSIDIIKFGYLINKNKFKYKNNNKNNNNG.

The 429-residue stretch at 15-443 folds into the Ketosynthase family 3 (KS3) domain; sequence YGDVAVIGIG…GSNVCLILSE (429 aa). Active-site for beta-ketoacyl synthase activity residues include cysteine 187, histidine 326, and histidine 366. The tract at residues 651–684 is acyl/malonyl transferases; sequence GVSADIIVGHSLGELSSSYSSGMIDFETLCHLIY. Catalysis depends on serine 661, which acts as the For acyl/malonyl transferase activity. Residues 906-934 adopt a coiled-coil conformation; sequence NFKSQLTNINNNNNNINNNNNNNNNNNNN. Residues 916 to 946 form a disordered region; that stretch reads NNNNNINNNNNNNNNNNNNNNNNNNNNNNNN. The interval 973 to 1102 is N-terminal hotdog fold; sequence HEKITNEGPS…GNFSLFKHNS (130 aa). Positions 973-1285 constitute a PKS/mFAS DH domain; that stretch reads HEKITNEGPS…CSSVSLANPS (313 aa). Histidine 1014 serves as the catalytic Proton acceptor; for dehydratase activity. The C-terminal hotdog fold stretch occupies residues 1119-1285; the sequence is NFTTISKHDF…CSSVSLANPS (167 aa). The active-site Proton donor; for dehydratase activity is the aspartate 1188. The disordered stretch occupies residues 1401–1429; sequence LNHHNNSENKNKNNNNNNNSNNNENSNNE. The segment covering 1412–1429 has biased composition (low complexity); that stretch reads KNNNNNNNSNNNENSNNE. A Carrier domain is found at 2594–2671; the sequence is SDNEFIHSTI…QSIDIIKFGY (78 aa). Serine 2631 is subject to O-(pantetheine 4'-phosphoryl)serine.

Requires pantetheine 4'-phosphate as cofactor.

Functionally, probable polyketide synthase. The sequence is that of Probable polyketide synthase 28 (pks28) from Dictyostelium discoideum (Social amoeba).